The chain runs to 622 residues: Chaperone protein HscA homolog (622 aa).

Belongs to the heat shock protein 70 family.

Functionally, chaperone involved in the maturation of iron-sulfur cluster-containing proteins. Has a low intrinsic ATPase activity which is markedly stimulated by HscB. This Azoarcus sp. (strain BH72) protein is Chaperone protein HscA homolog.